The sequence spans 35 residues: Ranatuerin-2SPa (35 aa).

Residues Cys-28 and Cys-33 are joined by a disulfide bond.

As to expression, expressed by the skin glands.

It is found in the secreted. Functionally, antibacterial activity against Gram-positive bacterium S.aureus. Shows no detectable hemolytic activity towards human erythrocytes. This is Ranatuerin-2SPa from Lithobates septentrionalis (Mink frog).